Consider the following 158-residue polypeptide: Protein Smg homolog (158 aa).

The protein belongs to the Smg family.

This Alteromonas mediterranea (strain DSM 17117 / CIP 110805 / LMG 28347 / Deep ecotype) protein is Protein Smg homolog.